We begin with the raw amino-acid sequence, 206 residues long: Ribosomal RNA large subunit methyltransferase E (206 aa).

Gly60, Trp62, Asp80, Asp96, and Asp121 together coordinate S-adenosyl-L-methionine. The Proton acceptor role is filled by Lys161.

The protein belongs to the class I-like SAM-binding methyltransferase superfamily. RNA methyltransferase RlmE family.

Its subcellular location is the cytoplasm. The enzyme catalyses uridine(2552) in 23S rRNA + S-adenosyl-L-methionine = 2'-O-methyluridine(2552) in 23S rRNA + S-adenosyl-L-homocysteine + H(+). Specifically methylates the uridine in position 2552 of 23S rRNA at the 2'-O position of the ribose in the fully assembled 50S ribosomal subunit. The sequence is that of Ribosomal RNA large subunit methyltransferase E from Saccharophagus degradans (strain 2-40 / ATCC 43961 / DSM 17024).